The chain runs to 209 residues: Ribosomal RNA large subunit methyltransferase E (209 aa).

The S-adenosyl-L-methionine site is built by glycine 63, tryptophan 65, aspartate 83, aspartate 99, and aspartate 124. The active-site Proton acceptor is the lysine 164.

This sequence belongs to the class I-like SAM-binding methyltransferase superfamily. RNA methyltransferase RlmE family.

It is found in the cytoplasm. The enzyme catalyses uridine(2552) in 23S rRNA + S-adenosyl-L-methionine = 2'-O-methyluridine(2552) in 23S rRNA + S-adenosyl-L-homocysteine + H(+). Specifically methylates the uridine in position 2552 of 23S rRNA at the 2'-O position of the ribose in the fully assembled 50S ribosomal subunit. In Cronobacter sakazakii (strain ATCC BAA-894) (Enterobacter sakazakii), this protein is Ribosomal RNA large subunit methyltransferase E.